We begin with the raw amino-acid sequence, 158 residues long: Scytalone dehydratase-like protein CPUR_05428 (158 aa).

Tyr24 and Tyr44 together coordinate substrate. Active-site residues include His79 and His104.

Belongs to the scytalone dehydratase family.

It functions in the pathway pigment biosynthesis. In terms of biological role, scytalone dehydratase-like protein; part of the ergochrome gene cluster responsible for the typical purple-black color of the ergot sclerotia. The ergochrome gene cluster produces several ergot pigments including the yellow ergochrome secalonic acid and its derivatives, as well as the red anthraquinones endocrocin and clavorubin. The pathway begins with the synthesis of atrochrysone thioester by the polyketide synthase (PKS) CPUR_05437. The atrochrysone carboxyl ACP thioesterase CPUR_05436 then breaks the thioester bond and releases the atrochrysone carboxylic acid from CPUR_05437. The atrochrysone carboxylic acid is then converted to atrochrysone which is further transformed into emodin anthrone. The next step is performed by the anthrone oxygenase CPUR_05434 that catalyzes the oxidation of emodinanthrone to emodin. Emodin is further modified to yield monodictyphenone via several steps involving CPUR_05427, CPUR_05428, CPUR_05429 and CPUR_05430. The short chain dehydrogenase/reductase CPUR_05418 then catalyzes the C-5 ketoreduction to give the xanthone skeleton of the monomeric units. Ergochromes formation requires further dimerization steps of different xanthone units, probably catalyzed by the cytochrome P450 monooxygenase CPUR_05419. CPUR_05425, CPUR_05426 and CPUR_05431 are unique to Claviceps, thus it is likely that they are involved in further modification of xanthone units or in their dimerization. The yellow ergochromes and the red anthraquinone pigments endocrocin and clavorubin are products from the same PKS derived precursors and the latter are likely shunt products in the pathway of xanthone biosynthesis. It is proposed that atrochrysone carboxylic acid released from the PKS CPUR_05437 can also be converted to endocrocin anthrone which is further oxidized into endocrocin by CPUR_05435. Endocrocin could be then modified to clavorubin, possibly by CPUR_05423 and CPUR_05431. Clavorubin is the principal anthraquinone metabolite produced by the cluster with a much higher yield compared to endocrocin. This chain is Scytalone dehydratase-like protein CPUR_05428, found in Claviceps purpurea (strain 20.1) (Ergot fungus).